Consider the following 185-residue polypeptide: Ribosome-recycling factor (185 aa).

The protein belongs to the RRF family.

It is found in the cytoplasm. Its function is as follows. Responsible for the release of ribosomes from messenger RNA at the termination of protein biosynthesis. May increase the efficiency of translation by recycling ribosomes from one round of translation to another. The protein is Ribosome-recycling factor of Alcanivorax borkumensis (strain ATCC 700651 / DSM 11573 / NCIMB 13689 / SK2).